The following is a 118-amino-acid chain: Aspartate 1-decarboxylase (118 aa).

S25 acts as the Schiff-base intermediate with substrate; via pyruvic acid in catalysis. Pyruvic acid (Ser) is present on S25. T57 is a substrate binding site. The Proton donor role is filled by Y58. 73 to 75 (GAA) lines the substrate pocket.

The protein belongs to the PanD family. As to quaternary structure, heterooctamer of four alpha and four beta subunits. The cofactor is pyruvate. In terms of processing, is synthesized initially as an inactive proenzyme, which is activated by self-cleavage at a specific serine bond to produce a beta-subunit with a hydroxyl group at its C-terminus and an alpha-subunit with a pyruvoyl group at its N-terminus.

It localises to the cytoplasm. It catalyses the reaction L-aspartate + H(+) = beta-alanine + CO2. Its pathway is cofactor biosynthesis; (R)-pantothenate biosynthesis; beta-alanine from L-aspartate: step 1/1. Functionally, catalyzes the pyruvoyl-dependent decarboxylation of aspartate to produce beta-alanine. The protein is Aspartate 1-decarboxylase of Syntrophomonas wolfei subsp. wolfei (strain DSM 2245B / Goettingen).